Reading from the N-terminus, the 286-residue chain is MVDGMKHLILKVTNRCNLNCIYCYANNKNNKDMDFKTAKNAIDYLLNLDNQIKIQFTGGEPLLNFNLIEKIVDYCNDNYSNCNIQYAIQTNATLINEKIAEKIKELDIKVGISIDGLEINDILRPYKNGKPSTLDTLKGMYILKSYNIPFGITTVVTNKNLPYLEEFVKYLIAFGVKSISFDLLKPKKKEHLTLMPNIEEFNKLLNKLGRYPIYIKNLQKRPKDKYCYLNSGDLLFVNEFGDIYLCPTLEGLSCLGNINDKNKIKLPKVKSKGCYAREFLIKTFKK.

In terms of domain architecture, Radical SAM core spans 2-221 (VDGMKHLILK…PIYIKNLQKR (220 aa)). Positions 16, 20, and 23 each coordinate [4Fe-4S] cluster.

This sequence belongs to the radical SAM superfamily. Anaerobic sulfatase-maturating enzyme family. [4Fe-4S] cluster is required as a cofactor.

This is an uncharacterized protein from Methanocaldococcus jannaschii (strain ATCC 43067 / DSM 2661 / JAL-1 / JCM 10045 / NBRC 100440) (Methanococcus jannaschii).